A 245-amino-acid polypeptide reads, in one-letter code: MSQSKFALPRNGFTFKRFFVAHDRCAMKVGTDGILLGAWAPIAGVKHVLDIGAGSGLLALMLAQRTGDDVHVEAVELDEEAAAQARENALASPWASRIEVWQADIHQWQPSQTRRYELIISNPPFFAEGVPCATSQREQARYTTTLDHASLLTCAAEHITEEGFFCVVLPVDIGNAFIERARAMGWHLRLRTDVAETELRPPHRVLLAFSPTAGECFSDRLAIRGPEQQYSEGFTALTEDFYLFM.

The protein belongs to the methyltransferase superfamily. tRNA (adenine-N(6)-)-methyltransferase family.

The protein resides in the cytoplasm. The enzyme catalyses adenosine(37) in tRNA1(Val) + S-adenosyl-L-methionine = N(6)-methyladenosine(37) in tRNA1(Val) + S-adenosyl-L-homocysteine + H(+). Its function is as follows. Specifically methylates the adenine in position 37 of tRNA(1)(Val) (anticodon cmo5UAC). This is tRNA1(Val) (adenine(37)-N6)-methyltransferase from Klebsiella pneumoniae subsp. pneumoniae (strain ATCC 700721 / MGH 78578).